Reading from the N-terminus, the 410-residue chain is UDP-N-acetylglucosamine--dolichyl-phosphate N-acetylglucosaminephosphotransferase (410 aa).

Residues 1 to 10 (MWAFPELPLP) are Lumenal-facing. The chain crosses the membrane as a helical span at residues 11–40 (LPLLVNLIGSLLGFVATVTLIPAFRSHFIA). The Cytoplasmic portion of the chain corresponds to 41 to 60 (ARLCGQDLNKLSQQQIPESQ). UDP-N-acetyl-alpha-D-glucosamine contacts are provided by residues 46 to 48 (QDL) and glutamate 58. A helical membrane pass occupies residues 61-80 (GVISGAVFLIILFCFIPFPF). At 81 to 93 (LNCFVEEQCKAFP) the chain is on the lumenal side. The helical transmembrane segment at 94–120 (HHEFVALIGALLAICCMIFLGFADDVL) threads the bilayer. At 121-123 (NLR) the chain is on the cytoplasmic side. Residues 124–145 (WRHKLLLPTAASLPLLMVYFTN) form a helical membrane-spanning segment. Lysine 127 contacts dolichyl phosphate. The Lumenal segment spans residues 146–168 (FGNTTIVVPKPFRWILGLHLDLG). The N-linked (GlcNAc...) asparagine glycan is linked to asparagine 148. Residues 169-188 (ILYYVYMGLLAVFCTNAINI) traverse the membrane as a helical segment. Residue 180–188 (VFCTNAINI) coordinates dolichyl phosphate. Mg(2+) is bound at residue asparagine 187. At 189–194 (LAGING) the chain is on the cytoplasmic side. Asparagine 193 serves as a coordination point for UDP-N-acetyl-alpha-D-glucosamine. Residues 195–215 (LEAGQSLVISASIIVFNLVEL) traverse the membrane as a helical segment. Over 216-220 (EGDYR) the chain is Lumenal. The chain crosses the membrane as a helical span at residues 221-244 (DDHIFSLYFMIPFFFTTLGLLYHN). At 245-252 (WYPSRVFV) the chain is on the cytoplasmic side. A helical membrane pass occupies residues 253-271 (GDTFCYFAGMTFAVVGILG). Aspartate 254 contacts Mg(2+). The Lumenal segment spans residues 272–273 (HF). The chain crosses the membrane as a helical span at residues 274 to 295 (SKTMLLFFMPQVFNFLYSLPQL). The Cytoplasmic segment spans residues 296 to 377 (FHIIPCPRHR…LLLKVFGPIH (82 aa)). 303 to 305 (RHR) lines the UDP-N-acetyl-alpha-D-glucosamine pocket. A helical membrane pass occupies residues 378–402 (ERNLTLLLLLLQVLSSAATFSIRYQ). The Lumenal segment spans residues 403 to 410 (LVRLFYDV).

Belongs to the glycosyltransferase 4 family. Homodimer. Requires Mg(2+) as cofactor.

It is found in the endoplasmic reticulum membrane. It carries out the reaction a di-trans,poly-cis-dolichyl phosphate + UDP-N-acetyl-alpha-D-glucosamine = an N-acetyl-alpha-D-glucosaminyl-diphospho-di-trans,poly-cis-dolichol + UMP. It participates in protein modification; protein glycosylation. With respect to regulation, inhibited by natural nucleoside antibiotic tunicamycin, which acts as a structural analog and competitor of UDP-GlcNAc. Its function is as follows. UDP-N-acetylglucosamine--dolichyl-phosphate N-acetylglucosaminephosphotransferase that operates in the biosynthetic pathway of dolichol-linked oligosaccharides, the glycan precursors employed in protein asparagine (N)-glycosylation. The assembly of dolichol-linked oligosaccharides begins on the cytosolic side of the endoplasmic reticulum membrane and finishes in its lumen. The sequential addition of sugars to dolichol pyrophosphate produces dolichol-linked oligosaccharides containing fourteen sugars, including two GlcNAcs, nine mannoses and three glucoses. Once assembled, the oligosaccharide is transferred from the lipid to nascent proteins by oligosaccharyltransferases. Catalyzes the initial step of dolichol-linked oligosaccharide biosynthesis, transfering GlcNAc-1-P from cytosolic UDP-GlcNAc onto the carrier lipid dolichyl phosphate (P-dolichol), yielding GlcNAc-P-P-dolichol embedded in the cytoplasmic leaflet of the endoplasmic reticulum membrane. This chain is UDP-N-acetylglucosamine--dolichyl-phosphate N-acetylglucosaminephosphotransferase, found in Mus musculus (Mouse).